The primary structure comprises 431 residues: Enolase (431 aa).

Glutamine 166 contributes to the (2R)-2-phosphoglycerate binding site. Glutamate 208 functions as the Proton donor in the catalytic mechanism. Mg(2+)-binding residues include aspartate 245, glutamate 288, and aspartate 315. (2R)-2-phosphoglycerate-binding residues include lysine 340, arginine 369, serine 370, and lysine 391. Lysine 340 (proton acceptor) is an active-site residue.

Belongs to the enolase family. Requires Mg(2+) as cofactor.

The protein resides in the cytoplasm. It is found in the secreted. The protein localises to the cell surface. The enzyme catalyses (2R)-2-phosphoglycerate = phosphoenolpyruvate + H2O. Its pathway is carbohydrate degradation; glycolysis; pyruvate from D-glyceraldehyde 3-phosphate: step 4/5. In terms of biological role, catalyzes the reversible conversion of 2-phosphoglycerate (2-PG) into phosphoenolpyruvate (PEP). It is essential for the degradation of carbohydrates via glycolysis. The chain is Enolase from Clostridium botulinum (strain Kyoto / Type A2).